The sequence spans 125 residues: Holo-[acyl-carrier-protein] synthase (125 aa).

Mg(2+)-binding residues include D8 and E60.

It belongs to the P-Pant transferase superfamily. AcpS family. Requires Mg(2+) as cofactor.

It localises to the cytoplasm. It carries out the reaction apo-[ACP] + CoA = holo-[ACP] + adenosine 3',5'-bisphosphate + H(+). In terms of biological role, transfers the 4'-phosphopantetheine moiety from coenzyme A to a Ser of acyl-carrier-protein. The polypeptide is Holo-[acyl-carrier-protein] synthase (Wolbachia sp. subsp. Brugia malayi (strain TRS)).